The primary structure comprises 253 residues: Snake venom serine proteinase 14 (253 aa).

The N-terminal stretch at 1–18 is a signal peptide; that stretch reads MVLIRVLANLLILQLSYA. Residues 19–24 constitute a propeptide that is removed on maturation; sequence QKSSEL. The 220-residue stretch at 25–244 folds into the Peptidase S1 domain; the sequence is VIGGDECNIN…YTDWIQSIIA (220 aa). Intrachain disulfides connect Cys31–Cys158, Cys49–Cys65, Cys93–Cys251, Cys137–Cys205, Cys169–Cys184, and Cys195–Cys220. Active-site charge relay system residues include His64 and Asp105. Asn116, Asn117, and Asn149 each carry an N-linked (GlcNAc...) asparagine glycan. Ser199 (charge relay system) is an active-site residue.

This sequence belongs to the peptidase S1 family. Snake venom subfamily. Monomer. Expressed by the venom gland.

It is found in the secreted. Snake venom serine protease that may act in the hemostasis system of the prey. In Crotalus adamanteus (Eastern diamondback rattlesnake), this protein is Snake venom serine proteinase 14.